The following is a 114-amino-acid chain: Flagellar hook-basal body complex protein FliE (114 aa).

The protein belongs to the FliE family.

It localises to the bacterial flagellum basal body. This is Flagellar hook-basal body complex protein FliE from Desulfitobacterium hafniense (strain Y51).